Consider the following 141-residue polypeptide: uncharacterized protein (141 aa).

This is an uncharacterized protein from Acheta domesticus (House cricket).